We begin with the raw amino-acid sequence, 588 residues long: Aspartate--tRNA ligase (588 aa).

An L-aspartate-binding site is contributed by glutamate 177. Residues 201-204 (QLFK) are aspartate. Arginine 223 is an L-aspartate binding site. Residues 223–225 (RDE) and glutamine 232 contribute to the ATP site. L-aspartate is bound at residue histidine 451. Glutamate 485 serves as a coordination point for ATP. Arginine 492 is a binding site for L-aspartate. An ATP-binding site is contributed by 537–540 (GLDR).

This sequence belongs to the class-II aminoacyl-tRNA synthetase family. Type 1 subfamily. As to quaternary structure, homodimer.

The protein localises to the cytoplasm. It catalyses the reaction tRNA(Asp) + L-aspartate + ATP = L-aspartyl-tRNA(Asp) + AMP + diphosphate. Functionally, catalyzes the attachment of L-aspartate to tRNA(Asp) in a two-step reaction: L-aspartate is first activated by ATP to form Asp-AMP and then transferred to the acceptor end of tRNA(Asp). The chain is Aspartate--tRNA ligase from Staphylococcus aureus (strain MRSA252).